The following is a 617-amino-acid chain: uncharacterized protein (617 aa).

One can recognise a B12-binding N-terminal domain in the interval 33 to 134 (TEDDFRGEKF…FXNATKQKGS (102 aa)). Residues Glu-84, 146 to 150 (GDVHD), His-149, Ser-194, Thr-198, and Ala-251 each bind methylcob(III)alamin. In terms of domain architecture, B12-binding spans 136–272 (NGKVVIATVK…NPEGRAALWE (137 aa)). One can recognise an AdoMet activation domain in the interval 288–617 (SKPLRKQLSI…MMKWLGVAMK (330 aa)). Residues Asp-337, Arg-528, and 583-584 (YF) each bind S-adenosyl-L-methionine.

This sequence belongs to the vitamin-B12 dependent methionine synthase family.

This is an uncharacterized protein from Haemophilus influenzae (strain ATCC 51907 / DSM 11121 / KW20 / Rd).